The following is a 22-amino-acid chain: 65 kDa membrane protein (22 aa).

Residues alanine 1–proline 22 are disordered.

It localises to the cell membrane. Its function is as follows. Binds various plasma and ECM-proteins. The sequence is that of 65 kDa membrane protein from Staphylococcus aureus.